Reading from the N-terminus, the 350-residue chain is Outer membrane porin PhoE (350 aa).

The first 21 residues, 1–21 (MKKSTLALVVMGVVASASVHA), serve as a signal peptide directing secretion.

Belongs to the Gram-negative porin family. As to quaternary structure, homotrimer.

Its subcellular location is the cell outer membrane. Uptake of inorganic phosphate, phosphorylated compounds, and some other negatively charged solutes. The protein is Outer membrane porin PhoE (phoE) of Enterobacter cloacae.